The sequence spans 495 residues: Cysteine-rich secretory protein LCCL domain-containing 2 (495 aa).

The signal sequence occupies residues 1–22; that stretch reads MSCLLNNMVLMGLALLVCGVQA. N27 carries an N-linked (GlcNAc...) asparagine glycan. The SCP domain maps to 60-200; the sequence is LMLHNKLRGQ…ENAVYLVCNY (141 aa). LCCL domains follow at residues 282–377 and 383–486; these read MTQV…SSSF and TETA…QNGN. 4 disulfides stabilise this stretch: C288–C306, C310–C330, C389–C411, and C415–C438.

In terms of assembly, binds to heparin, dermatan sulfate and chondroitin sulfate. As to expression, present in kidney renal tubules (at protein level).

It localises to the secreted. Promotes matrix assembly. This is Cysteine-rich secretory protein LCCL domain-containing 2 (Crispld2) from Mus musculus (Mouse).